The sequence spans 231 residues: uncharacterized protein (231 aa).

The Response regulatory domain maps to 4-116 (RILVVEDDED…ELHARVIAQL (113 aa)). Asp52 is modified (4-aspartylphosphate). Residues 129-230 (EETFLIGGKL…EWGRGYRFGA (102 aa)) constitute a DNA-binding region (ompR/PhoB-type).

Phosphorylated by YrkQ.

The protein resides in the cytoplasm. Functionally, member of the two-component regulatory system YrkQ/YrkP. This is an uncharacterized protein from Bacillus subtilis (strain 168).